Reading from the N-terminus, the 223-residue chain is Putative NAD(P)H nitroreductase SAUSA300_2462 (223 aa).

This sequence belongs to the nitroreductase family. FMN is required as a cofactor.

The polypeptide is Putative NAD(P)H nitroreductase SAUSA300_2462 (Staphylococcus aureus (strain USA300)).